Consider the following 307-residue polypeptide: Aspartate carbamoyltransferase catalytic subunit (307 aa).

Carbamoyl phosphate-binding residues include arginine 59 and threonine 60. Position 87 (lysine 87) interacts with L-aspartate. Residues arginine 109, histidine 137, and glutamine 140 each contribute to the carbamoyl phosphate site. The L-aspartate site is built by arginine 173 and arginine 223. Carbamoyl phosphate-binding residues include glycine 266 and proline 267.

The protein belongs to the aspartate/ornithine carbamoyltransferase superfamily. ATCase family. In terms of assembly, heterododecamer (2C3:3R2) of six catalytic PyrB chains organized as two trimers (C3), and six regulatory PyrI chains organized as three dimers (R2).

The catalysed reaction is carbamoyl phosphate + L-aspartate = N-carbamoyl-L-aspartate + phosphate + H(+). Its pathway is pyrimidine metabolism; UMP biosynthesis via de novo pathway; (S)-dihydroorotate from bicarbonate: step 2/3. Functionally, catalyzes the condensation of carbamoyl phosphate and aspartate to form carbamoyl aspartate and inorganic phosphate, the committed step in the de novo pyrimidine nucleotide biosynthesis pathway. The protein is Aspartate carbamoyltransferase catalytic subunit of Helicobacter pylori (strain ATCC 700392 / 26695) (Campylobacter pylori).